The sequence spans 226 residues: ATP synthase subunit a (226 aa).

5 helical membrane passes run 20-40 (LNWL…WLLP), 74-94 (FISL…PYIF), 100-120 (LTLT…YGWI), 158-180 (LAVR…GNTG), and 197-217 (IALL…FAVL).

It belongs to the ATPase A chain family. In terms of assembly, F-type ATPases have 2 components, CF(1) - the catalytic core - and CF(0) - the membrane proton channel. CF(1) has five subunits: alpha(3), beta(3), gamma(1), delta(1), epsilon(1). CF(0) has three main subunits: a, b and c.

Its subcellular location is the mitochondrion inner membrane. Functionally, mitochondrial membrane ATP synthase (F(1)F(0) ATP synthase or Complex V) produces ATP from ADP in the presence of a proton gradient across the membrane which is generated by electron transport complexes of the respiratory chain. F-type ATPases consist of two structural domains, F(1) - containing the extramembraneous catalytic core and F(0) - containing the membrane proton channel, linked together by a central stalk and a peripheral stalk. During catalysis, ATP synthesis in the catalytic domain of F(1) is coupled via a rotary mechanism of the central stalk subunits to proton translocation. Key component of the proton channel; it may play a direct role in the translocation of protons across the membrane. This Anopheles quadrimaculatus (Common malaria mosquito) protein is ATP synthase subunit a (ATP6).